A 1091-amino-acid chain; its full sequence is MSAKAISEQTGKELLYKYICTTSAIQNRFKYARVTPDTDWARLLQDHPWLLSQSLVVKPDQLIKRRGKLGLIGVNLTLDGVKSWLKPRLGQEATVGKATGFLKNFLIEPFVPHTQEEEFYVCIYATREGDYVLFHHEGGVDVGDVDAKAQKLLVGVDEKLNPEDIKKHLLVHAPEDKKEILASFISGLFNFYEDLYFTYLEINPLVVTKDGVYVLDLAAKVDATADYICKVKWGDIEFPPPFGREAYPEEAYIADLDAKSGASLKLTLLNPKGRIWTMVAGGGASVVYSDTICDLGGVNELANYGEYSGAPSEQQTYDYAKTILSLMTREKHPDGKILIIGGSIANFTNVAATFKGIVRAIRDYQGPLKEHEVTIFVRRGGPNYQEGLRVMGEVGKTTGIPIHVFGTETHMTAIVGMALGHRPIPNQPPTAAHTANFLLNASGSTSTPAPSRTASFSESRTDEVAPAKKAKPAMLQGKSATLFSRHTKAIVWGMQTRAVQGMLDFDYVCSRDEPSVAAMVYPFTGDHKQKFYWGHKEILIPVFKNMADAMKKHPEVDVLINFASLRSAYDSTMETMNYAQIRTIAIIAEGIPEALTRKLIKKADQKGVTIIGPATVGGIKPGCFKIGNTGGMLDNILASKLYRPGSVAYVSRSGGMSNELNNIISRTTDGVYEGVAIGGDRYPGSTFMDHVLRYQDTAGVKMIVVLGEIGGTEEYKICRGVTEGRITKPVVCWCIGTCAAMFSSEVQFGHAGACANQASETAVAKNQALKEAGVFVPRSFDELGEIIQSVYEDLVARGVIVPAQEVPPPTVPMDYSWARELGLIRKPASFMTSICDERGQELIYAGMPITEVFKEEMGIGGVLGLLWFQKRLPKYSCQFIEMCLMVTADHGPAVSGAHNTIICARAGKDLVSSLTSGLLTIGDRFGGALDAAAKMFSKAFDSGIIPMEFVNKMKKEGKLIMGIGHRVKSINNPDMRVQILKDYVRQHFPATPLLDYALEVEKITTSKKPNLILNVDGLIGVAFVDMLRHCGSFTREEADEYIDIGALNGIFVLGRSMGFIGHYLDQKRLKQGLYRHPWDDISYVLPEHMSM.

Positions 4 to 265 (KAISEQTGKE…LDAKSGASLK (262 aa)) constitute an ATP-grasp domain. Residues lysine 58, arginine 66, glycine 67, proline 109, valine 111, and glutamate 118 each coordinate ATP. Tyrosine 131 bears the Phosphotyrosine mark. Aspartate 216 serves as a coordination point for ATP. The Mg(2+) site is built by aspartate 257, serine 260, and alanine 262. At serine 263 the chain carries Phosphoserine. 5 residues coordinate citrate: glycine 309, asparagine 346, threonine 348, tyrosine 364, and arginine 379. Residues 442 to 457 (SGSTSTPAPSRTASFS) are compositionally biased toward low complexity. The interval 442–471 (SGSTSTPAPSRTASFSESRTDEVAPAKKAK) is disordered. Phosphothreonine is present on threonine 447. Serine 451 is modified (phosphoserine). Phosphoserine; by PKA and PKB/AKT1 or PKB/AKT2 or BCKDK is present on serine 455. Position 459 is a phosphoserine (serine 459). An N6-acetyllysine; alternate mark is found at lysine 530, lysine 536, and lysine 544. Glycyl lysine isopeptide (Lys-Gly) (interchain with G-Cter in ubiquitin); alternate cross-links involve residues lysine 530, lysine 536, and lysine 544. Residue threonine 629 is modified to Phosphothreonine. Residue serine 653 is modified to Phosphoserine. Tyrosine 672 carries the phosphotyrosine modification. The Tele-phosphohistidine intermediate role is filled by histidine 750. 769–779 (LKEAGVFVPRS) serves as a coordination point for CoA. Position 829 is a phosphoserine (serine 829). 4 positions are modified to N6-acetyllysine: lysine 938, lysine 958, lysine 968, and lysine 1067. At serine 1090 the chain carries Phosphoserine.

It in the N-terminal section; belongs to the succinate/malate CoA ligase beta subunit family. In the C-terminal section; belongs to the succinate/malate CoA ligase alpha subunit family. In terms of assembly, homotetramer. Requires Mg(2+) as cofactor. Phosphorylated by PKA and GSK3 in a sequential manner; phosphorylation results in activation of its activity. Phosphorylation on Thr-447 and Ser-451 depends on the phosphorylation state of Ser-455. Phosphorylation on Ser-455 is decreased by prior phosphorylation on the other 2 residues. Phosphorylated at Ser-455 by BCKDK and dephosphorylated by protein phosphatase PPM1K. In terms of processing, ISGylated. Post-translationally, acetylated at Lys-530, Lys-536 and Lys-544 by KAT2B/PCAF. Acetylation is promoted by glucose and stabilizes the protein, probably by preventing ubiquitination at the same sites. Acetylation promotes de novo lipid synthesis. Deacetylated by SIRT2. Ubiquitinated at Lys-530, Lys-536 and Lys-544 by the BCR(KLHL25) E3 ubiquitin ligase complex and UBR4, leading to its degradation. Ubiquitination is probably inhibited by acetylation at same site. BCR(KLHL25)-mediated degradation of ACLY promotes fatty acid oxidation and is required for differentiation of inducible regulatory T (iTreg) cells.

It localises to the cytoplasm. The protein localises to the cytosol. The catalysed reaction is oxaloacetate + acetyl-CoA + ADP + phosphate = citrate + ATP + CoA. With respect to regulation, phosphorylation results in activation of its activity. Glucose 6-phosphate, fructose 6-phosphate, fructose 2,6-bisphosphate, ribulose 5-phosphate, and fructose 1,6-bisphosphate also act as activators. Catalyzes the cleavage of citrate into oxaloacetate and acetyl-CoA, the latter serving as common substrate in multiple biochemical reactions in protein, carbohydrate and lipid metabolism. This is ATP-citrate synthase (ACLY) from Bos taurus (Bovine).